A 256-amino-acid chain; its full sequence is Hydroxyacylglutathione hydrolase (256 aa).

Positions 57, 59, 61, 62, 115, 134, and 172 each coordinate Zn(2+).

It belongs to the metallo-beta-lactamase superfamily. Glyoxalase II family. As to quaternary structure, monomer. Zn(2+) is required as a cofactor.

It carries out the reaction an S-(2-hydroxyacyl)glutathione + H2O = a 2-hydroxy carboxylate + glutathione + H(+). It functions in the pathway secondary metabolite metabolism; methylglyoxal degradation; (R)-lactate from methylglyoxal: step 2/2. In terms of biological role, thiolesterase that catalyzes the hydrolysis of S-D-lactoyl-glutathione to form glutathione and D-lactic acid. The sequence is that of Hydroxyacylglutathione hydrolase from Rhizobium meliloti (strain 1021) (Ensifer meliloti).